The following is a 172-amino-acid chain: Translocator protein 2 (172 aa).

A run of 5 helical transmembrane segments spans residues 3–23 (PQGA…SLLT), 45–65 (VLLA…YLVW), 80–100 (LGLY…FFAA), 104–124 (GLAL…ALIW), and 130–150 (LAAV…SIAY).

Belongs to the TspO/BZRP family. As to quaternary structure, homotetramer. May also form homodimer. As to expression, expressed in erythrocytes (at protein level).

It localises to the endoplasmic reticulum membrane. It is found in the cell membrane. Functionally, cholesterol-binding protein involved in the redistribution of cholesterol from lipid droplets to the endoplasmic reticulum. Required to meet cholesterol demands during erythropoietic differentiation. May play a role in transport processes at the plasma membrane of erythrocytes, including regulating VDAC-mediated ATP export, and import of the heme precursors protoporphyrin IX and 5-aminolevulinic acid. The polypeptide is Translocator protein 2 (Canis lupus familiaris (Dog)).